We begin with the raw amino-acid sequence, 280 residues long: MDRYYYEYTVDIDAFKDEIESFLMDRFYNGIEESDGKLILRSEKSLDDIMDELRTYVDSLIKLFDTEIHLKITKEKKENIDWIEKYKKSITPVEVGEFYIHPSWYEPKEGKTNIKIDPALAFGSGHHETTRGCLNAIQKYVQPGMELLDVGCGSGILSIAAAKKGAVVDICDTDALALEESQKNFSLNGVEFREGWVGSAANAKKKYDIVIANIVADVLIMIAKDLQETTKEGGILILSGIIEKYRNKVKNRFDFSILEELQEGEWITMILRNDRGTDGK.

The S-adenosyl-L-methionine site is built by Thr-130, Gly-151, Asp-172, and Asn-213.

This sequence belongs to the methyltransferase superfamily. PrmA family.

It is found in the cytoplasm. It catalyses the reaction L-lysyl-[protein] + 3 S-adenosyl-L-methionine = N(6),N(6),N(6)-trimethyl-L-lysyl-[protein] + 3 S-adenosyl-L-homocysteine + 3 H(+). In terms of biological role, methylates ribosomal protein L11. The chain is Ribosomal protein L11 methyltransferase from Nitratiruptor sp. (strain SB155-2).